The primary structure comprises 370 residues: Leucine-rich repeat-containing protein 19 (370 aa).

The signal sequence occupies residues 1 to 24 (MKVTGITILFWPLSMILLSDKIQS). Topologically, residues 25 to 270 (SKREVQCNFT…SEHEPLGKSW (246 aa)) are extracellular. Residues N32, N37, N62, and N95 are each glycosylated (N-linked (GlcNAc...) asparagine). 5 LRR repeats span residues 46-71 (KKDV…VLQT), 72-95 (YFLL…GFGN), 96-119 (LSSL…AFLG), 120-143 (LNKL…VFVP), and 145-168 (RSLK…LFHL). In terms of domain architecture, LRRCT spans 176 to 227 (NLWNCSCSLFNLQNWLNTSNVTLENENITMCSYPNSLQSYNIKTVPHKAECH). 6 N-linked (GlcNAc...) asparagine glycosylation sites follow: N179, N192, N195, N202, N251, and N256. Residues 271 to 291 (AFLVGVVVTVLTTSLLIFIAI) traverse the membrane as a helical segment. Over 292 to 370 (KCPIWYNILL…IDIHELCEEN (79 aa)) the chain is Cytoplasmic.

Interacts with TRAF2 and TRAF6. In terms of tissue distribution, expressed in renal collecting duct epithelial cells.

Its subcellular location is the membrane. With respect to regulation, activated by TLR ligands such as LPS, bacterial DNA and peptidoglycan. Functionally, pathogen-recognition receptor which mediates the activation of TRAF2- and TRAF6 NF-kappa-B signaling pathways and induces the expression of pro-inflammatory cytokines. In kidney, prevents infection by uropathogenic bacteria by inducing the production of cytokines, chemokines and antimicrobial substances. In gut, involved in host-microbiota interactions, plays a critical role in promoting the recruitment of immune cells and intestinal inflammation. This is Leucine-rich repeat-containing protein 19 from Homo sapiens (Human).